A 319-amino-acid chain; its full sequence is Small ribosomal subunit protein mS35 (319 aa).

The N-terminal 30 residues, 1–30 (MKVPLGLWKVSRGNLWSTQKRVLTMSRCLN), are a transit peptide targeting the mitochondrion.

The protein belongs to the mitochondrion-specific ribosomal protein mS35 family. Component of the mitochondrial small ribosomal subunit (mt-SSU). Mature yeast 74S mitochondrial ribosomes consist of a small (37S) and a large (54S) subunit. The 37S small subunit contains a 15S ribosomal RNA (15S mt-rRNA) and 34 different proteins. The 54S large subunit contains a 21S rRNA (21S mt-rRNA) and 46 different proteins.

Its subcellular location is the mitochondrion. In terms of biological role, component of the mitochondrial ribosome (mitoribosome), a dedicated translation machinery responsible for the synthesis of mitochondrial genome-encoded proteins, including at least some of the essential transmembrane subunits of the mitochondrial respiratory chain. The mitoribosomes are attached to the mitochondrial inner membrane and translation products are cotranslationally integrated into the membrane. This Saccharomyces cerevisiae (strain ATCC 204508 / S288c) (Baker's yeast) protein is Small ribosomal subunit protein mS35 (RSM24).